Consider the following 284-residue polypeptide: 2-dehydro-3-deoxyphosphooctonate aldolase (284 aa).

The protein belongs to the KdsA family.

It localises to the cytoplasm. It carries out the reaction D-arabinose 5-phosphate + phosphoenolpyruvate + H2O = 3-deoxy-alpha-D-manno-2-octulosonate-8-phosphate + phosphate. Its pathway is carbohydrate biosynthesis; 3-deoxy-D-manno-octulosonate biosynthesis; 3-deoxy-D-manno-octulosonate from D-ribulose 5-phosphate: step 2/3. The protein operates within bacterial outer membrane biogenesis; lipopolysaccharide biosynthesis. The polypeptide is 2-dehydro-3-deoxyphosphooctonate aldolase (Haemophilus influenzae (strain PittEE)).